The following is a 323-amino-acid chain: Tetraacyldisaccharide 4'-kinase (323 aa).

56-63 contributes to the ATP binding site; it reads TVGGVGKT.

This sequence belongs to the LpxK family.

It carries out the reaction a lipid A disaccharide + ATP = a lipid IVA + ADP + H(+). The protein operates within glycolipid biosynthesis; lipid IV(A) biosynthesis; lipid IV(A) from (3R)-3-hydroxytetradecanoyl-[acyl-carrier-protein] and UDP-N-acetyl-alpha-D-glucosamine: step 6/6. In terms of biological role, transfers the gamma-phosphate of ATP to the 4'-position of a tetraacyldisaccharide 1-phosphate intermediate (termed DS-1-P) to form tetraacyldisaccharide 1,4'-bis-phosphate (lipid IVA). This is Tetraacyldisaccharide 4'-kinase from Legionella pneumophila (strain Lens).